The following is a 205-amino-acid chain: Guanylate kinase (205 aa).

A Guanylate kinase-like domain is found at 17-195; the sequence is PRLTVLSGPS…VSRELLALML (179 aa). ATP is bound at residue 24–31; the sequence is GPSGVGKS.

Belongs to the guanylate kinase family.

It localises to the cytoplasm. It catalyses the reaction GMP + ATP = GDP + ADP. Essential for recycling GMP and indirectly, cGMP. In Streptomyces kasugaensis, this protein is Guanylate kinase.